Consider the following 498-residue polypeptide: Glycerol kinase (498 aa).

Residue Thr-14 participates in ADP binding. ATP-binding residues include Thr-14, Thr-15, and Ser-16. Thr-14 is a binding site for sn-glycerol 3-phosphate. Arg-18 lines the ADP pocket. Sn-glycerol 3-phosphate contacts are provided by Arg-84, Glu-85, and Tyr-136. Glycerol is bound by residues Arg-84, Glu-85, and Tyr-136. The residue at position 232 (His-232) is a Phosphohistidine; by HPr. Asp-246 serves as a coordination point for sn-glycerol 3-phosphate. Glycerol-binding residues include Asp-246 and Gln-247. ADP-binding residues include Thr-268 and Gly-311. Positions 268, 311, 315, and 412 each coordinate ATP. Gly-412 and Asn-416 together coordinate ADP.

It belongs to the FGGY kinase family. In terms of assembly, homotetramer and homodimer (in equilibrium). Post-translationally, the phosphoenolpyruvate-dependent sugar phosphotransferase system (PTS), including enzyme I, and histidine-containing protein (HPr) are required for the phosphorylation, which leads to the activation of the enzyme.

It carries out the reaction glycerol + ATP = sn-glycerol 3-phosphate + ADP + H(+). It participates in polyol metabolism; glycerol degradation via glycerol kinase pathway; sn-glycerol 3-phosphate from glycerol: step 1/1. Its activity is regulated as follows. Activated by phosphorylation and inhibited by fructose 1,6-bisphosphate (FBP). Its function is as follows. Key enzyme in the regulation of glycerol uptake and metabolism. Catalyzes the phosphorylation of glycerol to yield sn-glycerol 3-phosphate. This is Glycerol kinase from Lactococcus lactis subsp. lactis (strain IL1403) (Streptococcus lactis).